We begin with the raw amino-acid sequence, 89 residues long: Probable Fe(2+)-trafficking protein (89 aa).

It belongs to the Fe(2+)-trafficking protein family.

In terms of biological role, could be a mediator in iron transactions between iron acquisition and iron-requiring processes, such as synthesis and/or repair of Fe-S clusters in biosynthetic enzymes. This Legionella pneumophila (strain Paris) protein is Probable Fe(2+)-trafficking protein.